The chain runs to 87 residues: U14-lycotoxin-Ls1b (87 aa).

Residues 1–20 form the signal peptide; sequence MNSKVFAVLLLLALSTCVLS. The WAP domain maps to 21-66; it reads EKYCPTPRNTSCKKMNIRNNCCRDSDCTSNAFCCAEPCGNFCHKAS. Intrachain disulfides connect Cys24/Cys54, Cys32/Cys58, Cys41/Cys53, Cys42/Cys80, and Cys47/Cys62.

This sequence belongs to the venom protein 11 family. 01 (wap-1) subfamily. Post-translationally, contains 5 disulfide bonds. As to expression, expressed by the venom gland.

Its subcellular location is the secreted. Functionally, has antibacterial activity. This is U14-lycotoxin-Ls1b from Lycosa singoriensis (Wolf spider).